Consider the following 103-residue polypeptide: Large ribosomal subunit protein bL21 (103 aa).

The protein belongs to the bacterial ribosomal protein bL21 family. Part of the 50S ribosomal subunit. Contacts protein L20.

This protein binds to 23S rRNA in the presence of protein L20. In Laribacter hongkongensis (strain HLHK9), this protein is Large ribosomal subunit protein bL21.